Reading from the N-terminus, the 146-residue chain is Hemoglobin subunit beta (146 aa).

At Val1 the chain carries N-acetylvaline. In terms of domain architecture, Globin spans 2 to 146 (HLTPEEKALV…VANALAHKYH (145 aa)). Lys59 carries the post-translational modification N6-acetyllysine. Position 63 (His63) interacts with heme b. Position 82 is an N6-acetyllysine (Lys82). His92 is a heme b binding site. Position 93 is an S-nitrosocysteine (Cys93). Lys144 carries the N6-acetyllysine modification.

Belongs to the globin family. As to quaternary structure, heterotetramer of two alpha chains and two beta chains. In terms of tissue distribution, red blood cells.

Involved in oxygen transport from the lung to the various peripheral tissues. This is Hemoglobin subunit beta (HBB) from Trichechus inunguis (Amazon manatee).